The sequence spans 106 residues: UPF0145 protein Daci_3728 (106 aa).

Belongs to the UPF0145 family.

In Delftia acidovorans (strain DSM 14801 / SPH-1), this protein is UPF0145 protein Daci_3728.